A 510-amino-acid chain; its full sequence is Flagellin A (510 aa).

Belongs to the bacterial flagellin family. In terms of assembly, heteromer of FlaA and FlaB. FlaB is located proximal to the hook while the remainder of the filament is composed of the predominant FlaA.

It localises to the secreted. Its subcellular location is the bacterial flagellum. In terms of biological role, flagellin is the subunit protein which polymerizes to form the filaments of bacterial flagella. Important for motility and virulence. The polypeptide is Flagellin A (flaA) (Helicobacter pylori (strain ATCC 700392 / 26695) (Campylobacter pylori)).